Here is a 176-residue protein sequence, read N- to C-terminus: Inner membrane-spanning protein YciB (176 aa).

A run of 5 helical transmembrane segments spans residues 24-44 (TATAVAIGATLVQIAWVAFRH), 49-69 (PMLWVSLGVVTVFGGATLVLH), 76-96 (WKPTVLYWAFSVVLVVSALGF), 121-141 (YVWAVFFVLLGILNLFVAYNF), and 149-169 (FKLFGATGCLVVFIVGQSLWL).

The protein belongs to the YciB family.

Its subcellular location is the cell inner membrane. Plays a role in cell envelope biogenesis, maintenance of cell envelope integrity and membrane homeostasis. The sequence is that of Inner membrane-spanning protein YciB from Paraburkholderia phymatum (strain DSM 17167 / CIP 108236 / LMG 21445 / STM815) (Burkholderia phymatum).